A 398-amino-acid polypeptide reads, in one-letter code: Acetate kinase (398 aa).

Position 9 (Asn9) interacts with Mg(2+). Lys16 serves as a coordination point for ATP. Residue Arg89 participates in substrate binding. Asp146 (proton donor/acceptor) is an active-site residue. Residues 206 to 210, 281 to 283, and 329 to 333 contribute to the ATP site; these read HLGNG, DCR, and GIGEN. Glu384 is a Mg(2+) binding site.

Belongs to the acetokinase family. As to quaternary structure, homodimer. Mg(2+) is required as a cofactor. Requires Mn(2+) as cofactor.

The protein resides in the cytoplasm. The enzyme catalyses acetate + ATP = acetyl phosphate + ADP. The protein operates within metabolic intermediate biosynthesis; acetyl-CoA biosynthesis; acetyl-CoA from acetate: step 1/2. In terms of biological role, catalyzes the formation of acetyl phosphate from acetate and ATP. Can also catalyze the reverse reaction. This Vibrio campbellii (strain ATCC BAA-1116) protein is Acetate kinase.